Reading from the N-terminus, the 563-residue chain is Putative cysteine ligase BshC (563 aa).

A coiled-coil region spans residues 493–518 (KEKTYRAGRRKHDELLQQLDKAELNL).

It belongs to the BshC family.

The sequence is that of Putative cysteine ligase BshC from Chlorobaculum tepidum (strain ATCC 49652 / DSM 12025 / NBRC 103806 / TLS) (Chlorobium tepidum).